The chain runs to 125 residues: MGFWKFPPFLILSILVLYQAGMLHAAPFRMALGSSFDSATLTEEEMSLLLVAMVKDYVQMKATVLEQETEDFSITTQERSCNTAICVTHKMAGWLSRSGSVVKNNFMPINMGSKVLGRRRRQPQA.

Residues 1–25 (MGFWKFPPFLILSILVLYQAGMLHA) form the signal peptide. Residues 26 to 79 (APFRMALGSSFDSATLTEEEMSLLLVAMVKDYVQMKATVLEQETEDFSITTQER) constitute a propeptide that is removed on maturation. Cys81 and Cys86 are disulfide-bonded. Position 116 is a leucine amide (Leu116). The propeptide occupies 122-125 (QPQA).

The protein belongs to the calcitonin family. In terms of tissue distribution, mainly expressed in the thyroid gland and CNS. Found in the nerve cells of cerebrum, hippocampus, hypothalamus, pons/midbrain and thalamus.

It is found in the secreted. This is Calcitonin receptor-stimulating peptide 3 (CRSP3) from Sus scrofa (Pig).